The chain runs to 247 residues: ATP synthase subunit a, chloroplastic (247 aa).

5 consecutive transmembrane segments (helical) span residues 38 to 58 (QVLITSWVVITILLGSVIIAV), 95 to 115 (VPFIGTMFLFIFVSNWSGALL), 134 to 154 (INTTVALALLTSAAYFYAGLS), 199 to 219 (LVVVVLVSLVPLVVPIPVMFL), and 220 to 240 (GLFTSGIQALIFATLAAAYIG).

This sequence belongs to the ATPase A chain family. F-type ATPases have 2 components, CF(1) - the catalytic core - and CF(0) - the membrane proton channel. CF(1) has five subunits: alpha(3), beta(3), gamma(1), delta(1), epsilon(1). CF(0) has four main subunits: a, b, b' and c.

Its subcellular location is the plastid. The protein localises to the chloroplast thylakoid membrane. Functionally, key component of the proton channel; it plays a direct role in the translocation of protons across the membrane. The sequence is that of ATP synthase subunit a, chloroplastic from Oryza nivara (Indian wild rice).